Here is a 674-residue protein sequence, read N- to C-terminus: Dystrophia myotonica WD repeat-containing protein (674 aa).

Position 2 is an N-acetylalanine (Ala-2). 2 disordered regions span residues Gly-31–Pro-92 and Glu-103–Gly-122. The segment covering Pro-53–Pro-65 has biased composition (pro residues). A compositionally biased stretch (low complexity) spans Ala-66 to Ala-77. The segment covering Ser-78–Ala-90 has biased composition (pro residues). A compositionally biased stretch (low complexity) spans Ala-107–Gly-118. WD repeat units follow at residues Ile-211–Pro-251, Val-282–Leu-321, Ser-324–Arg-363, Gly-366–Gly-409, and Ala-413–His-453. Disordered stretches follow at residues Glu-384 to Ser-419, Leu-456 to Thr-516, Arg-532 to Leu-573, and Asp-637 to Val-674. Composition is skewed to low complexity over residues Ala-457–Gly-478 and Pro-487–Pro-499. The residue at position 495 (Ser-495) is a Phosphoserine. 2 stretches are compositionally biased toward gly residues: residues Ala-500–Gly-509 and Ser-550–Lys-563. Arg-551 is subject to Omega-N-methylarginine. The stretch at Ile-601–Glu-638 is one WD 6 repeat. The span at Ala-642 to Val-674 shows a compositional bias: polar residues.

In terms of assembly, component of the USP12/DMWD/WDR48 deubiquitinating complex. Interacts with USP12; promotes its enzymatic activity. Interacts with USP46.

The protein resides in the cytoplasm. Its subcellular location is the nucleus. It is found in the perikaryon. The protein localises to the cell projection. It localises to the dendrite. Its function is as follows. Regulator of the deubiquitinating USP12/DMWD/WDR48 complex. Functions as a cofactor that promotes USP12 enzymatic activity. The chain is Dystrophia myotonica WD repeat-containing protein from Homo sapiens (Human).